A 391-amino-acid chain; its full sequence is Acetate kinase (391 aa).

A Mg(2+)-binding site is contributed by Asn-4. Lys-11 contacts ATP. Substrate is bound at residue Arg-85. The active-site Proton donor/acceptor is Asp-142. ATP contacts are provided by residues 202–206 (HLGNG), 277–279 (DLR), and 325–329 (GIGEN). Glu-378 is a Mg(2+) binding site.

Belongs to the acetokinase family. In terms of assembly, homodimer. The cofactor is Mg(2+). Mn(2+) is required as a cofactor.

The protein localises to the cytoplasm. It catalyses the reaction acetate + ATP = acetyl phosphate + ADP. It participates in metabolic intermediate biosynthesis; acetyl-CoA biosynthesis; acetyl-CoA from acetate: step 1/2. Functionally, catalyzes the formation of acetyl phosphate from acetate and ATP. Can also catalyze the reverse reaction. The protein is Acetate kinase of Halalkalibacterium halodurans (strain ATCC BAA-125 / DSM 18197 / FERM 7344 / JCM 9153 / C-125) (Bacillus halodurans).